Here is a 316-residue protein sequence, read N- to C-terminus: Phosphate acyltransferase (316 aa).

Belongs to the PlsX family. In terms of assembly, homodimer. Probably interacts with PlsY.

It is found in the cytoplasm. It carries out the reaction a fatty acyl-[ACP] + phosphate = an acyl phosphate + holo-[ACP]. The protein operates within lipid metabolism; phospholipid metabolism. Catalyzes the reversible formation of acyl-phosphate (acyl-PO(4)) from acyl-[acyl-carrier-protein] (acyl-ACP). This enzyme utilizes acyl-ACP as fatty acyl donor, but not acyl-CoA. This chain is Phosphate acyltransferase, found in Chlamydia felis (strain Fe/C-56) (Chlamydophila felis).